The chain runs to 326 residues: uncharacterized protein (326 aa).

28–35 serves as a coordination point for ATP; sequence GPINSGKT.

Belongs to the archaeal ATPase family.

This is an uncharacterized protein from Pyrococcus abyssi (strain GE5 / Orsay).